The primary structure comprises 125 residues: Large ribosomal subunit protein bL17 (125 aa).

This sequence belongs to the bacterial ribosomal protein bL17 family. In terms of assembly, part of the 50S ribosomal subunit. Contacts protein L32.

The chain is Large ribosomal subunit protein bL17 from Marinomonas sp. (strain MWYL1).